A 39-amino-acid chain; its full sequence is Potassium channel toxin alpha-KTx 31.1 (39 aa).

Intrachain disulfides connect Cys7–Cys30, Cys13–Cys35, and Cys17–Cys37.

The protein belongs to the short scorpion toxin superfamily. Potassium channel inhibitor family. Alpha-KTx 31 subfamily. As to expression, expressed by the venom gland.

Its subcellular location is the secreted. Functionally, voltage-gated potassium channel inhibitor. 1 uM of the native toxin inhibits rat Kv1.2/KCNA2 (100% inhibition), and drosophila Shaker IR/Sh (100%), human Kv1.3/KCNA3 (83%), rat Kv1.1/KCNA1 (32%) and rat Kv1.6/KCNA6 (21%). The polypeptide is Potassium channel toxin alpha-KTx 31.1 (Buthus occitanus tunetanus (Common European scorpion)).